We begin with the raw amino-acid sequence, 252 residues long: Hydroxyacylglutathione hydrolase (252 aa).

Zn(2+)-binding residues include His-54, His-56, Asp-58, His-59, His-111, Asp-130, and His-170.

The protein belongs to the metallo-beta-lactamase superfamily. Glyoxalase II family. As to quaternary structure, monomer. It depends on Zn(2+) as a cofactor.

It catalyses the reaction an S-(2-hydroxyacyl)glutathione + H2O = a 2-hydroxy carboxylate + glutathione + H(+). The protein operates within secondary metabolite metabolism; methylglyoxal degradation; (R)-lactate from methylglyoxal: step 2/2. Functionally, thiolesterase that catalyzes the hydrolysis of S-D-lactoyl-glutathione to form glutathione and D-lactic acid. This Francisella tularensis subsp. novicida (strain U112) protein is Hydroxyacylglutathione hydrolase.